The following is a 326-amino-acid chain: Negative regulator of the PHO system (326 aa).

In terms of domain architecture, Protein kinase spans 8-290 (FQQLEKLGEG…ARQALQHPWF (283 aa)). ATP contacts are provided by residues 14-22 (LGEGTYATV) and Lys37. Asp131 serves as the catalytic Proton acceptor. Residues 300–326 (PQHLSDPYQQQQQQQQHPHQPIIDQQY) form a disordered region. Over residues 305–326 (DPYQQQQQQQQHPHQPIIDQQY) the composition is skewed to low complexity.

It belongs to the protein kinase superfamily. CMGC Ser/Thr protein kinase family. CDC2/CDKX subfamily. Interacts with a number of cyclins.

The enzyme catalyses L-seryl-[protein] + ATP = O-phospho-L-seryl-[protein] + ADP + H(+). The catalysed reaction is L-threonyl-[protein] + ATP = O-phospho-L-threonyl-[protein] + ADP + H(+). In terms of biological role, when phosphate concentrations are high it phosphorylates the PHO4 transcription factor thus establishing repression. This Candida albicans (Yeast) protein is Negative regulator of the PHO system (PHO85).